A 260-amino-acid chain; its full sequence is 6-carboxyhexanoate--CoA ligase (260 aa).

The protein belongs to the BioW family. As to quaternary structure, homodimer. Mg(2+) serves as cofactor.

It catalyses the reaction heptanedioate + ATP + CoA = 6-carboxyhexanoyl-CoA + AMP + diphosphate. It functions in the pathway metabolic intermediate metabolism; pimeloyl-CoA biosynthesis; pimeloyl-CoA from pimelate: step 1/1. Catalyzes the transformation of pimelate into pimeloyl-CoA with concomitant hydrolysis of ATP to AMP. This chain is 6-carboxyhexanoate--CoA ligase, found in Fibrobacter succinogenes (strain ATCC 19169 / S85).